Consider the following 513-residue polypeptide: ATP synthase subunit alpha (513 aa).

ATP is bound at residue 169 to 176 (GDRQTGKT).

The protein belongs to the ATPase alpha/beta chains family. As to quaternary structure, F-type ATPases have 2 components, CF(1) - the catalytic core - and CF(0) - the membrane proton channel. CF(1) has five subunits: alpha(3), beta(3), gamma(1), delta(1), epsilon(1). CF(0) has three main subunits: a(1), b(2) and c(9-12). The alpha and beta chains form an alternating ring which encloses part of the gamma chain. CF(1) is attached to CF(0) by a central stalk formed by the gamma and epsilon chains, while a peripheral stalk is formed by the delta and b chains.

It is found in the cell inner membrane. The catalysed reaction is ATP + H2O + 4 H(+)(in) = ADP + phosphate + 5 H(+)(out). Its function is as follows. Produces ATP from ADP in the presence of a proton gradient across the membrane. The alpha chain is a regulatory subunit. The chain is ATP synthase subunit alpha from Thioalkalivibrio sulfidiphilus (strain HL-EbGR7).